A 357-amino-acid polypeptide reads, in one-letter code: Alanine racemase (357 aa).

Residue lysine 35 is the Proton acceptor; specific for D-alanine of the active site. Lysine 35 is subject to N6-(pyridoxal phosphate)lysine. Arginine 128 is a substrate binding site. Tyrosine 254 acts as the Proton acceptor; specific for L-alanine in catalysis. Methionine 302 provides a ligand contact to substrate.

This sequence belongs to the alanine racemase family. It depends on pyridoxal 5'-phosphate as a cofactor.

The enzyme catalyses L-alanine = D-alanine. It functions in the pathway amino-acid biosynthesis; D-alanine biosynthesis; D-alanine from L-alanine: step 1/1. In terms of biological role, catalyzes the interconversion of L-alanine and D-alanine. May also act on other amino acids. The polypeptide is Alanine racemase (alr) (Marinobacter nauticus (strain ATCC 700491 / DSM 11845 / VT8) (Marinobacter aquaeolei)).